The chain runs to 289 residues: Putative 2-aminoethylphosphonate transport system permease protein PhnU (289 aa).

6 consecutive transmembrane segments (helical) span residues 19–39, 76–96, 111–131, 150–170, 202–222, and 254–274; these read WLLL…SLIV, FFAT…LVFI, FIAL…GSAG, FLYS…PLVM, VIFP…LLLT, and YTVA…LFSL. Residues 68-275 form the ABC transmembrane type-1 domain; that stretch reads LLNTLQIAFF…VLSLGLFSLY (208 aa).

Belongs to the binding-protein-dependent transport system permease family.

It localises to the cell inner membrane. Its function is as follows. Probably part of the PhnSTUV complex (TC 3.A.1.11.5) involved in 2-aminoethylphosphonate import. Probably responsible for the translocation of the substrate across the membrane. The chain is Putative 2-aminoethylphosphonate transport system permease protein PhnU (phnU) from Salmonella typhi.